A 173-amino-acid polypeptide reads, in one-letter code: Alpha-crystallin A chain (173 aa).

At methionine 1 the chain carries N-acetylmethionine. The tract at residues 1–63 is required for complex formation with BFSP1 and BFSP2; the sequence is MDITIQHPWF…RTVLESGISE (63 aa). Position 6 is a deamidated glutamine; partial (glutamine 6). The residue at position 45 (serine 45) is a Phosphoserine. Deamidated glutamine; partial is present on glutamine 50. The region spanning 52-164 is the sHSP domain; that stretch reads LFRTVLESGI…SDRSIPVSRE (113 aa). An N6-acetyllysine mark is found at lysine 70 and lysine 99. 3 residues coordinate Zn(2+): histidine 100, glutamate 102, and histidine 107. Serine 122 carries the phosphoserine modification. The residue at position 123 (asparagine 123) is a Deamidated asparagine; partial. Positions 146–167 are enriched in basic and acidic residues; the sequence is IHSDMDASHSDRSIPVSREEKP. Residues 146–173 form a disordered region; sequence IHSDMDASHSDRSIPVSREEKPTLAPSS. A Zn(2+)-binding site is contributed by histidine 154. O-linked (GlcNAc) serine glycosylation occurs at serine 162.

This sequence belongs to the small heat shock protein (HSP20) family. As to quaternary structure, heteromer composed of three CRYAA and one CRYAB subunits. Inter-subunit bridging via zinc ions enhances stability, which is crucial as there is no protein turn over in the lens. Can also form homodimers and homotetramers (dimers of dimers) which serve as the building blocks of homooligomers. Within homooligomers, the zinc-binding motif is created from residues of 3 different molecules. His-100 and Glu-102 from one molecule are ligands of the zinc ion, and His-107 and His-154 residues from additional molecules complete the site with tetrahedral coordination geometry. Part of a complex required for lens intermediate filament formation composed of BFSP1, BFSP2 and CRYAA. Post-translationally, acetylation at Lys-70 may increase chaperone activity. In terms of processing, undergoes age-dependent proteolytical cleavage at the C-terminus.

It is found in the cytoplasm. It localises to the nucleus. In terms of biological role, contributes to the transparency and refractive index of the lens. Acts as a chaperone, preventing aggregation of various proteins under a wide range of stress conditions. Required for the correct formation of lens intermediate filaments as part of a complex composed of BFSP1, BFSP2 and CRYAA. The chain is Alpha-crystallin A chain (CRYAA) from Osphranter rufus (Red kangaroo).